The following is a 392-amino-acid chain: G2/mitotic-specific cyclin-B (392 aa).

The protein belongs to the cyclin family. Cyclin AB subfamily.

In terms of biological role, essential for the control of the cell cycle at the G2/M (mitosis) transition. Interacts with the CDC2 protein kinase to form MPF. G2/M cyclins accumulate steadily during G2 and are abruptly destroyed at mitosis. The chain is G2/mitotic-specific cyclin-B from Hydra viridissima (Green hydra).